The chain runs to 161 residues: uncharacterized protein (161 aa).

The or 21 signal peptide spans 1–23 (MKKFAFLTALFAACYLPNAYAHA). Residues 129–149 (IYLHDILGGIGYIVGIAGLIA) form a helical membrane-spanning segment.

The protein resides in the membrane. This is an uncharacterized protein from Haemophilus influenzae (strain ATCC 51907 / DSM 11121 / KW20 / Rd).